A 363-amino-acid chain; its full sequence is Capsid protein (363 aa).

The stretch at 72 to 111 forms a coiled coil; it reads KKVEELNESLKAAILAGAEAEDLRNKLKDISQRYASQLEI. Positions 122 to 144 are disordered; the sequence is LKKKGHEQPLTGSGSSEPVHAES.

Its subcellular location is the virion. The sequence is that of Capsid protein from Citrus leaf blotch virus (isolate Nagami kumquat/France/SRA-153/1984) (CLBV).